A 439-amino-acid chain; its full sequence is Protein translocase subunit SecY (439 aa).

10 helical membrane passes run 19–39 (ILFT…TVPG), 68–88 (YSLF…VQLL), 116–136 (YITL…FQAM), 151–171 (LMIG…GEQI), 176–196 (FGSG…PSAV), 216–236 (WLFV…TTFV), 269–289 (VIPV…LQFL), 312–332 (WTGM…YSFV), 373–393 (VGAL…NVWG), and 396–416 (KIVA…IQAV).

The protein belongs to the SecY/SEC61-alpha family. Component of the Sec protein translocase complex. Heterotrimer consisting of SecY, SecE and SecG subunits. The heterotrimers can form oligomers, although 1 heterotrimer is thought to be able to translocate proteins. Interacts with the ribosome. Interacts with SecDF, and other proteins may be involved. Interacts with SecA.

The protein resides in the cell membrane. The central subunit of the protein translocation channel SecYEG. Consists of two halves formed by TMs 1-5 and 6-10. These two domains form a lateral gate at the front which open onto the bilayer between TMs 2 and 7, and are clamped together by SecE at the back. The channel is closed by both a pore ring composed of hydrophobic SecY resides and a short helix (helix 2A) on the extracellular side of the membrane which forms a plug. The plug probably moves laterally to allow the channel to open. The ring and the pore may move independently. This is Protein translocase subunit SecY from Lactococcus lactis subsp. lactis (strain IL1403) (Streptococcus lactis).